We begin with the raw amino-acid sequence, 76 residues long: Histone acetyltransferase (76 aa).

In terms of assembly, physically interacts with histone H3 in infected macrophages.

It is found in the secreted. The protein localises to the host cytoplasm. The protein resides in the host nucleus. The catalysed reaction is L-lysyl-[protein] + acetyl-CoA = N(6)-acetyl-L-lysyl-[protein] + CoA + H(+). Its activity is regulated as follows. Is completely inhibited by anacardic acid, an inhibitor of HAT activity. Functionally, histone acetyltransferase, which by binding to the host chromatin, may manipulate the expression of host genes involved in anti-inflammatory responses to evade clearance and to survive in the intracellular milieu. Acetylates histone H3 at the 'Lys-9' and 'Lys-14' positions. The polypeptide is Histone acetyltransferase (Mycobacterium tuberculosis (strain CDC 1551 / Oshkosh)).